Consider the following 146-residue polypeptide: Mediator of RNA polymerase II transcription subunit 31 (146 aa).

Residues 121 to 146 (NANDQDENKEKEENKEVPEVRINGTN) form a disordered region. Residues 126–139 (DENKEKEENKEVPE) are compositionally biased toward basic and acidic residues.

It belongs to the Mediator complex subunit 31 family. In terms of assembly, component of the Mediator complex.

The protein resides in the nucleus. Functionally, component of the Mediator complex, a coactivator involved in the regulated transcription of nearly all RNA polymerase II-dependent genes. Mediator functions as a bridge to convey information from gene-specific regulatory proteins to the basal RNA polymerase II transcription machinery. Mediator is recruited to promoters by direct interactions with regulatory proteins and serves as a scaffold for the assembly of a functional preinitiation complex with RNA polymerase II and the general transcription factors. In Candida albicans (strain SC5314 / ATCC MYA-2876) (Yeast), this protein is Mediator of RNA polymerase II transcription subunit 31 (SOH1).